Reading from the N-terminus, the 394-residue chain is MTKPIRNVAVLGATGSIGAAALDVLARHPRQFHVSLLAAGQRVDALLALCHTYRPDHAVIGDATLYTTLRDGLNAAGLATKAYAGEAALAELVASTTCDTVVAAIVGAAGLHSTLAAARAGKRLLLANKESLVLAGMLLMREASISGAEIIPIDSEHNAIFQCLRSRTTNGVHRVTLTASGGPFRGHNRTMLAKITPTQAMAHPTWSMGPKISVDSATLMNKGLEVIEAHHLFGLPSEQIDVLVHPQSLVHSLVEFIDGSTLAQLSLPDMRTTLAVGLAWPERIGSGVPGLDLMKHNRLDFEHPDTETFSCLRLARDAMQTGGTAPAVLNAANEIAVSAFLQGRIGFLTIPALIEHALTTLPRYEADTLETLLTVDTETRRITHAALTHFPLPL.

Residues threonine 14, glycine 15, serine 16, isoleucine 17, glycine 40, and asparagine 128 each contribute to the NADPH site. Lysine 129 provides a ligand contact to 1-deoxy-D-xylulose 5-phosphate. Glutamate 130 provides a ligand contact to NADPH. Aspartate 154 contributes to the Mn(2+) binding site. 1-deoxy-D-xylulose 5-phosphate contacts are provided by serine 155, glutamate 156, serine 180, and histidine 203. Position 156 (glutamate 156) interacts with Mn(2+). Glycine 209 contacts NADPH. The 1-deoxy-D-xylulose 5-phosphate site is built by serine 216, asparagine 221, lysine 222, and glutamate 225. Mn(2+) is bound at residue glutamate 225.

This sequence belongs to the DXR family. Requires Mg(2+) as cofactor. Mn(2+) is required as a cofactor.

It carries out the reaction 2-C-methyl-D-erythritol 4-phosphate + NADP(+) = 1-deoxy-D-xylulose 5-phosphate + NADPH + H(+). It functions in the pathway isoprenoid biosynthesis; isopentenyl diphosphate biosynthesis via DXP pathway; isopentenyl diphosphate from 1-deoxy-D-xylulose 5-phosphate: step 1/6. Functionally, catalyzes the NADPH-dependent rearrangement and reduction of 1-deoxy-D-xylulose-5-phosphate (DXP) to 2-C-methyl-D-erythritol 4-phosphate (MEP). This is 1-deoxy-D-xylulose 5-phosphate reductoisomerase from Xylella fastidiosa (strain M12).